We begin with the raw amino-acid sequence, 393 residues long: MSIKTVKDFNSFAGKRVLVRCDFNVPLKEGSISDDTRIKAALPTIEYLKERGARIVLVSHLGRPEGKKNLKYSLKPVANRLSGLLNQDVKMFSDCIGSEIVNNTLQMKDGDVVLLENVRFYAEEEKNDKNFAKKLSENGDVFVSDAFGAAHRAHASTVGVSDYLPSVGGFLMEKEDKFLGEVLKNPEKPFVSIIGGSKVSSKIAVLESLLSKSNVVVIGGGMAYTFLYSKGYSIGKSLLESEYIDTASSFLRKAKELGVKVILPLDHIVADDFNKNSTPEYIDSLNIPENKIGMDIGVNTLKEIEKVVKTAKTIIWNGPLGVFEFDSFSKGTAKVAEMVASCSGLTVVGGGDSVAAVNKFNLSDKITHVSTGGGASLEYLEGKILPGIKVLEK.

Residues 22-24, R37, 60-63, R119, and R152 contribute to the substrate site; these read DFN and HLGR. ATP is bound by residues K202, G293, E324, and 350–353; that span reads GGDS.

It belongs to the phosphoglycerate kinase family. As to quaternary structure, monomer.

Its subcellular location is the cytoplasm. It catalyses the reaction (2R)-3-phosphoglycerate + ATP = (2R)-3-phospho-glyceroyl phosphate + ADP. It functions in the pathway carbohydrate degradation; glycolysis; pyruvate from D-glyceraldehyde 3-phosphate: step 2/5. This is Phosphoglycerate kinase from Borreliella afzelii (strain PKo) (Borrelia afzelii).